We begin with the raw amino-acid sequence, 287 residues long: Elongation factor Ts (287 aa).

The interval 80-83 (TDFL) is involved in Mg(2+) ion dislocation from EF-Tu.

Belongs to the EF-Ts family.

It is found in the cytoplasm. In terms of biological role, associates with the EF-Tu.GDP complex and induces the exchange of GDP to GTP. It remains bound to the aminoacyl-tRNA.EF-Tu.GTP complex up to the GTP hydrolysis stage on the ribosome. The protein is Elongation factor Ts of Pseudomonas entomophila (strain L48).